A 333-amino-acid chain; its full sequence is Holliday junction branch migration complex subunit RuvB (333 aa).

The large ATPase domain (RuvB-L) stretch occupies residues 1–173 (MTAPENLDAA…FGIIEHLEYY (173 aa)). ATP is bound by residues Leu11, Arg12, Gly53, Lys56, Thr57, Thr58, 120–122 (EDF), Arg163, Tyr173, and Arg210. Position 57 (Thr57) interacts with Mg(2+). Residues 174-244 (TAEEIATNLL…RAQSALDKLG (71 aa)) are small ATPAse domain (RuvB-S). The head domain (RuvB-H) stretch occupies residues 247 to 333 (SAGLDDRDKK…IDDGNGIFLN (87 aa)). Residues Arg302 and Arg307 each coordinate DNA.

The protein belongs to the RuvB family. Homohexamer. Forms an RuvA(8)-RuvB(12)-Holliday junction (HJ) complex. HJ DNA is sandwiched between 2 RuvA tetramers; dsDNA enters through RuvA and exits via RuvB. An RuvB hexamer assembles on each DNA strand where it exits the tetramer. Each RuvB hexamer is contacted by two RuvA subunits (via domain III) on 2 adjacent RuvB subunits; this complex drives branch migration. In the full resolvosome a probable DNA-RuvA(4)-RuvB(12)-RuvC(2) complex forms which resolves the HJ.

The protein resides in the cytoplasm. It carries out the reaction ATP + H2O = ADP + phosphate + H(+). In terms of biological role, the RuvA-RuvB-RuvC complex processes Holliday junction (HJ) DNA during genetic recombination and DNA repair, while the RuvA-RuvB complex plays an important role in the rescue of blocked DNA replication forks via replication fork reversal (RFR). RuvA specifically binds to HJ cruciform DNA, conferring on it an open structure. The RuvB hexamer acts as an ATP-dependent pump, pulling dsDNA into and through the RuvAB complex. RuvB forms 2 homohexamers on either side of HJ DNA bound by 1 or 2 RuvA tetramers; 4 subunits per hexamer contact DNA at a time. Coordinated motions by a converter formed by DNA-disengaged RuvB subunits stimulates ATP hydrolysis and nucleotide exchange. Immobilization of the converter enables RuvB to convert the ATP-contained energy into a lever motion, pulling 2 nucleotides of DNA out of the RuvA tetramer per ATP hydrolyzed, thus driving DNA branch migration. The RuvB motors rotate together with the DNA substrate, which together with the progressing nucleotide cycle form the mechanistic basis for DNA recombination by continuous HJ branch migration. Branch migration allows RuvC to scan DNA until it finds its consensus sequence, where it cleaves and resolves cruciform DNA. The chain is Holliday junction branch migration complex subunit RuvB from Deinococcus radiodurans (strain ATCC 13939 / DSM 20539 / JCM 16871 / CCUG 27074 / LMG 4051 / NBRC 15346 / NCIMB 9279 / VKM B-1422 / R1).